A 537-amino-acid chain; its full sequence is Putative cysteine ligase BshC (537 aa).

Residues 422-450 (IEKVEGMIEQQRRLNKDLLDEVAGNQNNI) are a coiled coil.

It belongs to the BshC family.

Involved in bacillithiol (BSH) biosynthesis. May catalyze the last step of the pathway, the addition of cysteine to glucosamine malate (GlcN-Mal) to generate BSH. The polypeptide is Putative cysteine ligase BshC (Staphylococcus aureus (strain USA300)).